The chain runs to 2472 residues: Highly reducing polyketide synthase xilA (2472 aa).

Residues 1–417 (MPGGVRDLPA…GTNGHCIIDD (417 aa)) enclose the Ketosynthase family 3 (KS3) domain. Catalysis depends on for beta-ketoacyl synthase activity residues cysteine 162, histidine 298, and histidine 340. Positions 442–502 (NDINGKSGTN…QRKHHHPKTD (61 aa)) are disordered. The segment covering 450–489 (TNGANGANRVNGVNGVNGVNGVNGANGHSNASLLSNGSNN) has biased composition (low complexity). Residues 597 to 932 (FIFTGQGAQW…CTGTLFVHNV (336 aa)) enclose the Malonyl-CoA:ACP transacylase (MAT) domain. The N-terminal hotdog fold stretch occupies residues 991–1129 (HDLLGSKVPG…GQIKVEVAKF (139 aa)). The PKS/mFAS DH domain occupies 991–1294 (HDLLGSKVPG…FTSLNNEQES (304 aa)). The active-site Proton acceptor; for dehydratase activity is the histidine 1023. A C-terminal hotdog fold region spans residues 1141–1294 (GRLVDAQTWY…FTSLNNEQES (154 aa)). Residue aspartate 1207 is the Proton donor; for dehydratase activity of the active site. A methyltransferase (CMeT) domain region spans residues 1289 to 1505 (NNEQESPSTG…IITVHALRSI (217 aa)). The Enoyl reductase (ER) domain maps to 1724 to 2036 (GLLTSLYFKP…KGTHIGKMVI (313 aa)). One can recognise a Ketoreductase (KR) domain in the interval 2060-2239 (ASYILVGGLS…ATTVSLGFIK (180 aa)). Residues 2391–2469 (ETVKLVSDAI…SIARVIVEEA (79 aa)) form the Carrier domain. Serine 2428 is modified (O-(pantetheine 4'-phosphoryl)serine).

Pantetheine 4'-phosphate serves as cofactor.

It functions in the pathway secondary metabolite biosynthesis. Highly reducing polyketide synthase; part of the gene cluster that mediates the biosynthesis of the 6-methyl-2-pyrone derivative xylariolide D. XilA produces the 5-alkyl-6-methyl-2-pyrone backbone called prexylariolide D via sequential condensations of 4 malonyl-CoA units with one acetyl-CoA starter unit. During the biosynthesis, the linear polyketide chain is branched by the addition of an acetyl unit as the origin of the methyl group at the 2-pyrone ring. Prexylariolide D is then hydroxylated at the side chain by xilC to form the final product, xylariolide D. The chain is Highly reducing polyketide synthase xilA from Penicillium crustosum (Blue mold fungus).